The primary structure comprises 232 residues: Peroxisomal protein PEX21 (232 aa).

Cysteine 5 participates in a covalent cross-link: Glycyl cysteine thioester (Cys-Gly) (interchain with G-Cter in ubiquitin).

The protein belongs to the peroxin-21 family. In terms of assembly, interacts with PEX7. Post-translationally, monoubiquitinated at Cys-5; acts as a signal for PEX21 extraction and is required for proper export from peroxisomes and recycling.

Its subcellular location is the cytoplasm. The protein resides in the cytosol. The protein localises to the peroxisome. Mediates peroxisomal import of proteins containing a C-terminal PTS2-type peroxisomal targeting signal via its interaction with PEX7. Interaction with PEX7 only takes place when PEX7 is associated with cargo proteins containing a PTS2 peroxisomal targeting signal. PEX7 along with PTS2-containing cargo proteins are then translocated through the PEX13-PEX14 docking complex together with PEX21. The protein is Peroxisomal protein PEX21 (PEX21) of Candida glabrata (strain ATCC 2001 / BCRC 20586 / JCM 3761 / NBRC 0622 / NRRL Y-65 / CBS 138) (Yeast).